Consider the following 498-residue polypeptide: O-methyltransferase OME1 (498 aa).

Polar residues predominate over residues 1 to 19 (MSTMALHRTASTKSDTTMA). Disordered regions lie at residues 1-23 (MSTMALHRTASTKSDTTMACPNG) and 42-83 (HRAE…QPEY). Positions 50–65 (SSTSSVSTTPTSPSFS) are enriched in low complexity. Residue aspartate 358 participates in S-adenosyl-L-methionine binding. Residue histidine 406 is the Proton acceptor of the active site.

This sequence belongs to the class I-like SAM-binding methyltransferase superfamily. Cation-independent O-methyltransferase family.

It participates in secondary metabolite biosynthesis. O-methyltransferase; part of the gene cluster that mediates the biosynthesis of a tyrosine-derived cytochalasan acting as a fungal signal recognized by resistant rice plants and leads to avirulence in Pi33 resistant rice cultivars. The first step in the pathway is catalyzed by the hybrid PKS-NRPS ACE1, assisted by the enoyl reductase RAP1, that are responsible for fusion of the tyrosine precursor and the polyketide backbone. The polyketide synthase module (PKS) of ACE1 is responsible for the synthesis of the polyketide backbone and the downstream nonribosomal peptide synthetase (NRPS) amidates the carboxyl end of the polyketide with the tyrosine precursor. Because ACE1 lacks a designated enoylreductase (ER) domain, the required activity is provided the enoyl reductase RAP1. Reduction by the hydrolyase ORFZ, followed by dehydration and intra-molecular Diels-Alder cyclization by the Diels-Alderase ORF3 then yield the required isoindolone-fused macrocycle. A number of oxidative steps catalyzed by the tailoring enzymes identified within the cluster, including cytochrome P450 monooxygenases CYP1 to CYP4, the FAD-linked oxidoreductase OXR2 and the short-chain dehydrogenase/reductase OXR1, are further required to afford the final cytochalasans that confer avirulence and which have still to be identified. The monooxygenase CYP1 has been shown to be a site-selective C-18 hydroxylase whereas the function of CYP3 is the site-selective epoxidation of the C-6/C-7 olefin that is present in some intermediate compounds. Finally, SYN2 and RAP2 are not required for avirulence in Pi33 resistant rice cultivars. This chain is O-methyltransferase OME1, found in Pyricularia oryzae (strain 70-15 / ATCC MYA-4617 / FGSC 8958) (Rice blast fungus).